Reading from the N-terminus, the 172-residue chain is Large ribosomal subunit protein uL10 (172 aa).

Belongs to the universal ribosomal protein uL10 family. As to quaternary structure, part of the ribosomal stalk of the 50S ribosomal subunit. The N-terminus interacts with L11 and the large rRNA to form the base of the stalk. The C-terminus forms an elongated spine to which L12 dimers bind in a sequential fashion forming a multimeric L10(L12)X complex.

Its function is as follows. Forms part of the ribosomal stalk, playing a central role in the interaction of the ribosome with GTP-bound translation factors. This chain is Large ribosomal subunit protein uL10, found in Rhizobium etli (strain ATCC 51251 / DSM 11541 / JCM 21823 / NBRC 15573 / CFN 42).